We begin with the raw amino-acid sequence, 189 residues long: Threonylcarbamoyl-AMP synthase (189 aa).

The YrdC-like domain maps to 9 to 189; sequence ASAQRKLSVY…IDGETGKRLR (181 aa).

This sequence belongs to the SUA5 family. TsaC subfamily.

Its subcellular location is the cytoplasm. The catalysed reaction is L-threonine + hydrogencarbonate + ATP = L-threonylcarbamoyladenylate + diphosphate + H2O. In terms of biological role, required for the formation of a threonylcarbamoyl group on adenosine at position 37 (t(6)A37) in tRNAs that read codons beginning with adenine. Catalyzes the conversion of L-threonine, HCO(3)(-)/CO(2) and ATP to give threonylcarbamoyl-AMP (TC-AMP) as the acyladenylate intermediate, with the release of diphosphate. This chain is Threonylcarbamoyl-AMP synthase, found in Neisseria gonorrhoeae (strain ATCC 700825 / FA 1090).